The following is a 548-amino-acid chain: DNA ligase (548 aa).

Glu196 contacts ATP. Lys198 (N6-AMP-lysine intermediate) is an active-site residue. Positions 203, 218, 250, and 284 each coordinate ATP. Glu250 serves as a coordination point for a divalent metal cation. An a divalent metal cation-binding site is contributed by Glu345. Residues Arg361 and Lys365 each coordinate ATP. Residues 515 to 548 are disordered; it reads EQLIRNSQENTKKTFARLATTYDGPSPNKKLKLN.

Belongs to the ATP-dependent DNA ligase family. A divalent metal cation is required as a cofactor.

It catalyses the reaction ATP + (deoxyribonucleotide)n-3'-hydroxyl + 5'-phospho-(deoxyribonucleotide)m = (deoxyribonucleotide)n+m + AMP + diphosphate.. Functionally, able to ligate a double-stranded synthetic DNA substrate containing a single nick and inefficiently ligated a 1 nucleotide gap but did not ligate a 2 nucleotide gap. It is able to ligate short, complementary overhangs but not blunt-ended double-stranded DNA. May be implicated in DNA repair and recombination. The sequence is that of DNA ligase (LIG) from Lepidoptera (butterflies and moths).